Consider the following 1242-residue polypeptide: MNATIRPKPAGSRWTDEQWKAIAAGGRDILVAAAAGSGKTAVLVERIIQKVTAEEGAVDIDRLLVVTFTNAAAAEMKARIGEALERELAKRPHSLHLRRQLSLLPRAAISTLHSFCLDVIRKYYYLLDLDPSFRIADETEIELLKEDVLEELLEEEYGKPDNERFFAVVDAYTGDRSDAELQEMIVALYEFSRSHPEPDEWLAGLTSMYDVDERTDIKTLPAARYIAQHAAMELAAARRLIRRALELAEEPGGPRPYAERLREDRDMITDLETRLSGPWAELHRALKALSFGRLPACRGKDYDERLIDEAKSLRDQAKKKVEALRDNVFSLDPSVWLRHMREMKPIVETIANLVRRFAVMFQAAKREKGIVDFSDLEHYCLHILRRRDPETGEWQPSPAALEYQAQFDEVLVDEYQDTNLVQEAILQLVKKGSERTGNLFMVGDVKQSIYRFRLAEPMLFLDKYKRFTADGEEGGMKIDLASNFRSRREVLDGTNFLFAQLMGETVGEMVYDEAAQLKYGADYPEGEDAAPEVMIINRQRAAEEDEEEAAEWEAAELEARLMAKKIKEIVSAPFYVYDRSSGQPRRAMYRDIVILVRSMTNAPQMIEQLQAQGIPAAADLSSGYFQATEISIMLSLLKVIDNPHQDIPLAAVLRSPLFRFDENELAMIRLADPKGTFYEALCSFRQKPAETKEEANAQRKAAAFLERLEGWRTMARRRSLADLIWQLYRDTQFYDFVGALPGGRQRQANLRALYDRARQYESTSFRGLFRFLRFIERLQERGDDLGAARPLGEQEDVVRIMTIHSSKGLEFPIVFLAGLARPFHTRDLHHPYLLDKELGFAARFVHPRLRISYPTLPLLAIQTKKRLELLAEEMRILYVALTRAKEKLYLLASVNDAAKEIEKWKSAASERGWLLPDDVRASARSYLDWIGRALIRHRDGGALAGTKAPEEVASHPSVWRVAIVPAADLRGAEAAREEMDGGVLLALEQGRPVPVEGGWQKEVKRRLLWRYSYEKETAVRAKQSVSELKEQRALFGEQADEWRPRQGTAPVFSRPRFMQEKTLTPAEKGTALHVVMRHLDLQAPLDESWIRSQIVRLVEKELLSAEQAEAVDPAAIAAFFTADLGRRLCAAREVHREVPFSLGLKAAELYGGEGTESGRRVLVQGVIDCVFADECGYVMIDYKTDEVVHRFAGQKEEAARFLLGRYGTQMRLYRRAIEQIWRAPVAECYLYSFDGGFVVAVE.

Positions 12-487 constitute a UvrD-like helicase ATP-binding domain; that stretch reads SRWTDEQWKA…IDLASNFRSR (476 aa). Residue 33 to 40 coordinates ATP; sequence AAAGSGKT. The UvrD-like helicase C-terminal domain maps to 514–808; sequence AAQLKYGADY…RIMTIHSSKG (295 aa).

It belongs to the helicase family. AddA subfamily. As to quaternary structure, heterodimer of AddA and AddB/RexB. Mg(2+) is required as a cofactor.

It carries out the reaction Couples ATP hydrolysis with the unwinding of duplex DNA by translocating in the 3'-5' direction.. The enzyme catalyses ATP + H2O = ADP + phosphate + H(+). Functionally, the heterodimer acts as both an ATP-dependent DNA helicase and an ATP-dependent, dual-direction single-stranded exonuclease. Recognizes the chi site generating a DNA molecule suitable for the initiation of homologous recombination. The AddA nuclease domain is required for chi fragment generation; this subunit has the helicase and 3' -&gt; 5' nuclease activities. The polypeptide is ATP-dependent helicase/nuclease subunit A (Geobacillus kaustophilus (strain HTA426)).